Reading from the N-terminus, the 520-residue chain is MKPEDFRASTQRPFTGEEYLKSLQDGREIYIYGERVKDVTTHPAFRNAAASVAQLYDALHKPEMQDSLCWNTDTGSGGYTHKFFRVAKSADDLRHERDAIAEWSRLSYGWMGRTPDYKAAFGCALGGTPGFYGQFEQNARNWYTRIQETGLYFNHAIVNPPIDRHLPTDKVKDVYIKLEKETDAGIIVSGAKVVATNSALTHYNMIGFGSAQVMGENPDFALMFVAPMDADGVKLISRASYEMVAGATGSPYDYPLSSRFDENDAILVMDNVLIPWENVLLYRDFDRCRRWTMEGGFARMYPLQACVRLAVKLDFITALLKKSLECTGTLEFRGVQADLGEVVAWRNTFWALSDSMCSEATPWVNGAYLPDHAALQTYRVLAPMAYAKIKNIIERNVTSGLIYLPSSARDLNNPQIDQYLAKYVRGSNGMDHVQRIKILKLMWDAIGSEFGGRHELYEINYSGSQDEIRLQCLRQAQSSGNMDKMMAMVDRCLSEYDQNGWTVPHLHNNDDINMLDKLLK.

It belongs to the FADH(2)-utilizing monooxygenase family. In terms of assembly, 4-HPA 3-monooxygenase consists of a reductase component HpaC and an oxygenase component HpaB.

It carries out the reaction 4-hydroxyphenylacetate + FADH2 + O2 = 3,4-dihydroxyphenylacetate + FAD + H2O + H(+). It functions in the pathway aromatic compound metabolism; 4-hydroxyphenylacetate degradation; pyruvate and succinate semialdehyde from 4-hydroxyphenylacetate: step 1/7. In terms of biological role, utilizes FADH(2) supplied by HpaC or by another flavin reductase, to catalyze the hydroxylation of 4-hydroxyphenylacetic acid, leading to the production of 3,4-DHPA. Can also oxidize phenol to catechol, and hydroxylate other phenol derivatives. The sequence is that of 4-hydroxyphenylacetate 3-monooxygenase oxygenase component (hpaB) from Escherichia coli.